Here is a 157-residue protein sequence, read N- to C-terminus: uncharacterized protein (157 aa).

An N-acetyltransferase domain is found at 9–154 (LLINYKTLDE…ETNLNAVTNE (146 aa)).

This is an uncharacterized protein from Bacillus cereus (strain B4264).